The primary structure comprises 280 residues: Probable inactive shikimate kinase like 1, chloroplastic (280 aa).

The N-terminal 54 residues, 1–54, are a transit peptide targeting the chloroplast; that stretch reads MEIFSASASLTLTGFVPRLLPLLSPQARTTLCKPLLSSSSTRLISCHSRIAPSR.

The protein belongs to the shikimate kinase family.

It is found in the plastid. Its subcellular location is the chloroplast. In terms of biological role, required for chloroplast biogenesis. The chain is Probable inactive shikimate kinase like 1, chloroplastic (SKL1) from Arabidopsis thaliana (Mouse-ear cress).